A 420-amino-acid polypeptide reads, in one-letter code: UDP-N-acetyl-D-mannosamine dehydrogenase (420 aa).

NAD(+)-binding residues include Tyr13, Ile14, Asp33, Thr85, and Thr126. Residues Arg160, Val161, Lys212, Asn216, Arg219, His250, Arg252, and Gly263 each coordinate UDP-N-acetyl-alpha-D-mannosaminouronate. Lys212 functions as the Proton donor/acceptor in the catalytic mechanism. Cys266 acts as the Nucleophile in catalysis. Residues Phe330 and Lys331 each contribute to the UDP-N-acetyl-alpha-D-mannosaminouronate site. Arg338 contacts NAD(+). Lys416 lines the UDP-N-acetyl-alpha-D-mannosaminouronate pocket.

This sequence belongs to the UDP-glucose/GDP-mannose dehydrogenase family. WecC subfamily. Homodimer.

It catalyses the reaction UDP-N-acetyl-alpha-D-mannosamine + 2 NAD(+) + H2O = UDP-N-acetyl-alpha-D-mannosaminouronate + 2 NADH + 3 H(+). Its pathway is bacterial outer membrane biogenesis; enterobacterial common antigen biosynthesis. Functionally, catalyzes the four-electron oxidation of UDP-N-acetyl-D-mannosamine (UDP-ManNAc), reducing NAD(+) and releasing UDP-N-acetylmannosaminuronic acid (UDP-ManNAcA). The protein is UDP-N-acetyl-D-mannosamine dehydrogenase of Salmonella typhimurium (strain LT2 / SGSC1412 / ATCC 700720).